The sequence spans 204 residues: LexA repressor (204 aa).

The H-T-H motif DNA-binding region spans Ile-30–Lys-50. Catalysis depends on for autocatalytic cleavage activity residues Ser-125 and Lys-162.

It belongs to the peptidase S24 family. Homodimer.

It catalyses the reaction Hydrolysis of Ala-|-Gly bond in repressor LexA.. Its function is as follows. Represses a number of genes involved in the response to DNA damage (SOS response), including recA and lexA. In the presence of single-stranded DNA, RecA interacts with LexA causing an autocatalytic cleavage which disrupts the DNA-binding part of LexA, leading to derepression of the SOS regulon and eventually DNA repair. The polypeptide is LexA repressor (Carboxydothermus hydrogenoformans (strain ATCC BAA-161 / DSM 6008 / Z-2901)).